The following is a 344-amino-acid chain: MTQSLSYRDAGVDIDAGDQLVENIKPFAKRTMRPEVLGGLGGFGALVEISKKYREPVLVSGTDGVGTKLKLAFDWNRHDTVGIDLVAMSVNDILVQGAEPLFFLDYFACGKLDVAQATDVIKGIAEGCEQAGCALIGGETAEMPGMYPVGEYDLAGFAVGVVEKSQVITGRDIRPGDVVLGLGSNGVHSNGFSLVRKIIERAGPDLDAPFDGDRTLRDAIIAPTRIYVKPLLKLMAGVPVKGMAHITGGGITENTPRVLPDNCVAQIDAASWTLPKLFQWLQQEGNVDAQEMYRTFNCGIGMVVIVAPEQADAATALLTAEGETVHRLGLVRARQGDEHQTQIA.

Belongs to the AIR synthase family.

The protein localises to the cytoplasm. It carries out the reaction 2-formamido-N(1)-(5-O-phospho-beta-D-ribosyl)acetamidine + ATP = 5-amino-1-(5-phospho-beta-D-ribosyl)imidazole + ADP + phosphate + H(+). Its pathway is purine metabolism; IMP biosynthesis via de novo pathway; 5-amino-1-(5-phospho-D-ribosyl)imidazole from N(2)-formyl-N(1)-(5-phospho-D-ribosyl)glycinamide: step 2/2. In Laribacter hongkongensis (strain HLHK9), this protein is Phosphoribosylformylglycinamidine cyclo-ligase.